The primary structure comprises 215 residues: 3-demethoxyubiquinol 3-hydroxylase (215 aa).

6 residues coordinate Fe cation: glutamate 64, glutamate 94, histidine 97, glutamate 146, glutamate 178, and histidine 181.

Belongs to the COQ7 family. Fe cation serves as cofactor.

It is found in the cell membrane. It catalyses the reaction a 5-methoxy-2-methyl-3-(all-trans-polyprenyl)benzene-1,4-diol + AH2 + O2 = a 3-demethylubiquinol + A + H2O. It participates in cofactor biosynthesis; ubiquinone biosynthesis. Functionally, catalyzes the hydroxylation of 2-nonaprenyl-3-methyl-6-methoxy-1,4-benzoquinol during ubiquinone biosynthesis. The protein is 3-demethoxyubiquinol 3-hydroxylase of Ectopseudomonas mendocina (strain ymp) (Pseudomonas mendocina).